A 270-amino-acid chain; its full sequence is Glucosamine-6-phosphate deaminase (270 aa).

Residue aspartate 68 is the Proton acceptor; for enolization step of the active site. Aspartate 145 (for ring-opening step) is an active-site residue. The Proton acceptor; for ring-opening step role is filled by histidine 147. Residue glutamate 152 is the For ring-opening step of the active site.

It belongs to the glucosamine/galactosamine-6-phosphate isomerase family. NagB subfamily.

The enzyme catalyses alpha-D-glucosamine 6-phosphate + H2O = beta-D-fructose 6-phosphate + NH4(+). The protein operates within amino-sugar metabolism; N-acetylneuraminate degradation; D-fructose 6-phosphate from N-acetylneuraminate: step 5/5. Functionally, catalyzes the reversible isomerization-deamination of glucosamine 6-phosphate (GlcN6P) to form fructose 6-phosphate (Fru6P) and ammonium ion. The chain is Glucosamine-6-phosphate deaminase from Bifidobacterium longum (strain NCC 2705).